Here is a 709-residue protein sequence, read N- to C-terminus: Polyribonucleotide nucleotidyltransferase (709 aa).

Mg(2+)-binding residues include D489 and D495. Positions 556–615 constitute a KH domain; sequence PKIDMIKIDVDKIKVVIGKGGETIDKIIAETGVKIDIDEEGNVSIFSSDQAAIDRTKDII. In terms of domain architecture, S1 motif spans 625 to 693; that stretch reads GEVYHAKVVR…DKGRVDASMK (69 aa).

It belongs to the polyribonucleotide nucleotidyltransferase family. Mg(2+) is required as a cofactor.

The protein localises to the cytoplasm. It catalyses the reaction RNA(n+1) + phosphate = RNA(n) + a ribonucleoside 5'-diphosphate. Its function is as follows. Involved in mRNA degradation. Catalyzes the phosphorolysis of single-stranded polyribonucleotides processively in the 3'- to 5'-direction. The polypeptide is Polyribonucleotide nucleotidyltransferase (Streptococcus agalactiae serotype Ia (strain ATCC 27591 / A909 / CDC SS700)).